The sequence spans 389 residues: Krueppel-like factor 17 (389 aa).

Disordered stretches follow at residues 1–48 and 239–279; these read MYGR…SGVH and LVSQ…GSSE. Polar residues predominate over residues 26–38; the sequence is AQDNENSAPILNM. A compositionally biased stretch (basic and acidic residues) spans 264-278; it reads KNSRPQEGTGRRGSS. 3 consecutive C2H2-type zinc fingers follow at residues 283 to 307, 313 to 337, and 343 to 365; these read YCCN…QRKH, YSCN…MRVH, and YKCD…QKTH. The segment at 356 to 389 is disordered; that stretch reads DHLKQHQKTHRPGPSDPQANNNNGEQDSPPAAGP. A compositionally biased stretch (polar residues) spans 372 to 381; the sequence is PQANNNNGEQ.

It belongs to the Sp1 C2H2-type zinc-finger protein family.

The protein localises to the nucleus. In terms of biological role, transcription repressor that binds to the promoter of target genes and prevents their expression. Acts as a negative regulator of epithelial-mesenchymal transition and metastasis in breast cancer. Specifically binds the 5'-CACCC-3' sequence in the promoter of ID1, a key metastasis regulator in breast cancer, and repress its expression. May be a germ cell-specific transcription factor that plays important roles in spermatid differentiation and oocyte development. The polypeptide is Krueppel-like factor 17 (KLF17) (Homo sapiens (Human)).